Reading from the N-terminus, the 332-residue chain is Ribosomal RNA small subunit methyltransferase C (332 aa).

The protein belongs to the methyltransferase superfamily. RsmC family. As to quaternary structure, monomer.

Its subcellular location is the cytoplasm. It catalyses the reaction guanosine(1207) in 16S rRNA + S-adenosyl-L-methionine = N(2)-methylguanosine(1207) in 16S rRNA + S-adenosyl-L-homocysteine + H(+). Specifically methylates the guanine in position 1207 of 16S rRNA in the 30S particle. In Pseudomonas fluorescens (strain ATCC BAA-477 / NRRL B-23932 / Pf-5), this protein is Ribosomal RNA small subunit methyltransferase C.